The primary structure comprises 171 residues: CDP-archaeol synthase (171 aa).

Transmembrane regions (helical) follow at residues 7-27, 55-75, 84-104, 115-135, and 141-161; these read MFWALWYILPAYFANASPVLL, FLGGVSVGTLVGVLQYYLTPA, VLLAFLLSFGALMGDLVGSFI, PAVGLDQLGFLISALAFAYPV, and GQMLFLLIFTPLVHWGANYFA.

Belongs to the CDP-archaeol synthase family. The cofactor is Mg(2+).

Its subcellular location is the cell membrane. The enzyme catalyses 2,3-bis-O-(geranylgeranyl)-sn-glycerol 1-phosphate + CTP + H(+) = CDP-2,3-bis-O-(geranylgeranyl)-sn-glycerol + diphosphate. Its pathway is membrane lipid metabolism; glycerophospholipid metabolism. Its function is as follows. Catalyzes the formation of CDP-2,3-bis-(O-geranylgeranyl)-sn-glycerol (CDP-archaeol) from 2,3-bis-(O-geranylgeranyl)-sn-glycerol 1-phosphate (DGGGP) and CTP. This reaction is the third ether-bond-formation step in the biosynthesis of archaeal membrane lipids. In Thermococcus gammatolerans (strain DSM 15229 / JCM 11827 / EJ3), this protein is CDP-archaeol synthase.